Reading from the N-terminus, the 368-residue chain is Solute carrier family 35 member G1 (368 aa).

The next 10 helical transmembrane spans lie at 72-92 (GLGL…SLFV), 100-120 (AVEI…PCLI), 134-154 (LFLF…YYAF), 161-181 (DATV…WIFL), 190-210 (AFFT…PFIF), 225-245 (IKGT…LVIL), 256-276 (LSIW…LFVI), 289-309 (LFLI…TKAV), 316-336 (LVAI…IAFF), and 340-360 (PTWW…GATI). 2 consecutive EamA domains span residues 83-205 (FLFS…LIVR) and 236-360 (VLAA…GATI).

It belongs to the TMEM20 family. As to quaternary structure, interacts with STIM1; stimulated by depletion of intracellular calcium. Interacts with ORAI1. Interacts with the plasma membrane calcium-transporting ATPases ATP2B1 and ATP2B4. Interacts with ATP1A1, ATP2A2, KPNB1 and XPO1.

Its subcellular location is the cell membrane. The protein localises to the endoplasmic reticulum membrane. May play a role in intracellular calcium sensing and homeostasis. May act as a negative regulator of plasma membrane calcium-transporting ATPases preventing calcium efflux from the cell. The chain is Solute carrier family 35 member G1 (Slc35g1) from Mus musculus (Mouse).